The primary structure comprises 203 residues: 2-hydroxychromene-2-carboxylate isomerase (203 aa).

The Nucleophile role is filled by Ser11. Ser11 serves as a coordination point for glutathione. Substrate contacts are provided by residues Lys43, 53 to 54 (NR), and Tyr84. Residues Val168 and 179-182 (WGND) contribute to the glutathione site.

Belongs to the GST superfamily. NadH family. Glutathione serves as cofactor.

The enzyme catalyses 2-hydroxychromene-2-carboxylate = (3E)-4-(2-hydroxyphenyl)-2-oxobut-3-enoate. It participates in aromatic compound metabolism; naphthalene degradation. Functionally, involved in the naphthalene catabolic pathway. Catalyzes the reversible glutathione-dependent isomerization of 2-hydroxychromene-2-carboxylate (HCCA) to trans-O-hydroxybenzylidenepyruvate (THBPA). This Pseudomonas putida (Arthrobacter siderocapsulatus) protein is 2-hydroxychromene-2-carboxylate isomerase (nahD).